The following is a 668-amino-acid chain: DNA ligase (668 aa).

NAD(+)-binding positions include 37–41 (DNVYD), 86–87 (SM), and Glu116. Lys118 functions as the N6-AMP-lysine intermediate in the catalytic mechanism. NAD(+) contacts are provided by Arg139, Glu173, Lys288, and Lys312. The Zn(2+) site is built by Cys406, Cys409, Cys424, and Cys429. A BRCT domain is found at 591–668 (APDNPFKDKT…TEEEAIAQIE (78 aa)).

The protein belongs to the NAD-dependent DNA ligase family. LigA subfamily. The cofactor is Mg(2+). Requires Mn(2+) as cofactor.

It catalyses the reaction NAD(+) + (deoxyribonucleotide)n-3'-hydroxyl + 5'-phospho-(deoxyribonucleotide)m = (deoxyribonucleotide)n+m + AMP + beta-nicotinamide D-nucleotide.. Its function is as follows. DNA ligase that catalyzes the formation of phosphodiester linkages between 5'-phosphoryl and 3'-hydroxyl groups in double-stranded DNA using NAD as a coenzyme and as the energy source for the reaction. It is essential for DNA replication and repair of damaged DNA. The chain is DNA ligase from Lactobacillus helveticus (strain DPC 4571).